The chain runs to 141 residues: Period circadian protein (141 aa).

The tract at residues 1 to 141 (EGSGGSGSSG…VTLTESLLNK (141 aa)) is disordered. A compositionally biased stretch (polar residues) spans 11–23 (HFTTGSNVHMSSV). The span at 29-68 (GGTGGTGTGTGTGTGTGTGTGTGTGTGTGTGTGTGTGTGT) shows a compositional bias: gly residues. 19 consecutive repeat copies span residues 30–31 (GT), 33–34 (GT), 35–36 (GT), 37–38 (GT), 39–40 (GT), 41–42 (GT), 43–44 (GT), 45–46 (GT), 47–48 (GT), 49–50 (GT), 51–52 (GT), 53–54 (GT), 55–56 (GT), 57–58 (GT), 59–60 (GT), 61–62 (GT), 63–64 (GT), 65–66 (GT), and 67–68 (GT). Residues 30–94 (GTGGTGTGTG…ANGTGTGKGT (65 aa)) are 32 X 2 AA approximate tandem repeats of G-T. The stretch at 69–70 (AS) is one 20; approximate repeat. Low complexity predominate over residues 69 to 85 (ASGTATGTASGTATGTA). Repeat 21 spans residues 71 to 72 (GT). The stretch at 73-74 (AT) is one 22; approximate repeat. Repeat unit 23 spans residues 75–76 (GT). The stretch at 77 to 78 (AS) is one 24; approximate repeat. Repeat 25 spans residues 79-80 (GT). Residues 81-82 (AT) form a 26; approximate repeat. Copy 27 of the repeat occupies 83 to 84 (GT). The 28; approximate repeat unit spans residues 85-86 (AN). Repeat copies occupy residues 87–88 (GT) and 89–90 (GT). Residues 91 to 92 (GK) form a 31; approximate repeat. Residues 93-94 (GT) form repeat 32. The span at 101 to 113 (SGSGSGTGTGTGT) shows a compositional bias: gly residues. Residues 114–129 (GTTTTTTTGNNSSSST) are compositionally biased toward low complexity. Residues 130–141 (PPVTLTESLLNK) show a composition bias toward polar residues.

Forms a heterodimer with timeless (TIM); the complex then translocates into the nucleus. Post-translationally, phosphorylated with a circadian rhythmicity, probably by the double-time protein (dbt). Phosphorylation could be implicated in the stability of per monomer and in the formation of heterodimer per-tim.

It is found in the nucleus. It localises to the cytoplasm. Its subcellular location is the perinuclear region. Functionally, essential for biological clock functions. Determines the period length of circadian and ultradian rhythms; an increase in PER dosage leads to shortened circadian rhythms and a decrease leads to lengthened circadian rhythms. Essential for the circadian rhythmicity of locomotor activity, eclosion behavior, and for the rhythmic component of the male courtship song that originates in the thoracic nervous system. The biological cycle depends on the rhythmic formation and nuclear localization of the TIM-PER complex. Light induces the degradation of TIM, which promotes elimination of PER. Nuclear activity of the heterodimer coordinatively regulates PER and TIM transcription through a negative feedback loop. Behaves as a negative element in circadian transcriptional loop. Does not appear to bind DNA, suggesting indirect transcriptional inhibition. This chain is Period circadian protein (per), found in Drosophila serrata (Fruit fly).